Consider the following 345-residue polypeptide: L-threonine 3-dehydrogenase (345 aa).

Cysteine 42 is a binding site for Zn(2+). Catalysis depends on charge relay system residues threonine 44 and histidine 47. Zn(2+) is bound by residues histidine 67, glutamate 68, cysteine 97, cysteine 100, cysteine 103, and cysteine 111. Residues isoleucine 179, aspartate 199, arginine 204, 266-268 (LGI), and 290-291 (IY) contribute to the NAD(+) site.

The protein belongs to the zinc-containing alcohol dehydrogenase family. In terms of assembly, homotetramer. The cofactor is Zn(2+).

The protein localises to the cytoplasm. It catalyses the reaction L-threonine + NAD(+) = (2S)-2-amino-3-oxobutanoate + NADH + H(+). It functions in the pathway amino-acid degradation; L-threonine degradation via oxydo-reductase pathway; glycine from L-threonine: step 1/2. Catalyzes the NAD(+)-dependent oxidation of L-threonine to 2-amino-3-ketobutyrate. This chain is L-threonine 3-dehydrogenase, found in Rhizobium johnstonii (strain DSM 114642 / LMG 32736 / 3841) (Rhizobium leguminosarum bv. viciae).